The chain runs to 685 residues: E3 ubiquitin-protein ligase RNF6 (685 aa).

Basic and acidic residues-rich tracts occupy residues 1 to 10, 17 to 29, and 88 to 107; these read MNQSRSRSDG, PQDH…ERRW, and DLRD…SSHE. Disordered regions lie at residues 1-29, 81-107, 121-142, 168-273, 286-345, and 499-576; these read MNQS…ERRW, EQLA…SSHE, GNAT…RTNP, DYTD…REGQ, RSNV…RRRG, and EADS…NPNN. 3 stretches are compositionally biased toward polar residues: residues 199-213, 250-264, and 286-297; these read SQTS…SNIP, ASRT…QSGG, and RSNVTVRNTNQR. Residues 303–313 show a composition bias toward low complexity; the sequence is LRSTSNSRSRS. Composition is skewed to polar residues over residues 314–325 and 519–528; these read PIQRQSGTVYHN and ELSNLGTDNN. The RING-type zinc-finger motif lies at 632–673; it reads CSVCISDYVTGNKLRQLPCMHEFHIHCIDRWLSENCTCPICR.

It belongs to the RNF12 family. Weakly expressed in peripheral blood, spleen, prostate, testis and ovary. According to a report, it is preferentially expressed in testis and ovary and hardly detected in other tissues.

It localises to the nucleus. The protein localises to the cytoplasm. It is found in the cell projection. Its subcellular location is the axon. The protein resides in the PML body. The catalysed reaction is S-ubiquitinyl-[E2 ubiquitin-conjugating enzyme]-L-cysteine + [acceptor protein]-L-lysine = [E2 ubiquitin-conjugating enzyme]-L-cysteine + N(6)-ubiquitinyl-[acceptor protein]-L-lysine.. The protein operates within protein modification; protein ubiquitination. Its function is as follows. E3 ubiquitin-protein ligase mediating 'Lys-48'-linked polyubiquitination of LIMK1 and its subsequent targeting to the proteasome for degradation. Negatively regulates axonal outgrowth through regulation of the LIMK1 turnover. Mediates 'Lys-6' and 'Lys-27'-linked polyubiquitination of AR/androgen receptor thereby modulating its transcriptional activity. May also bind DNA and function as a transcriptional regulator. Mediates polyubiquitination of QKI in macrophages, leading to its degradation. The polypeptide is E3 ubiquitin-protein ligase RNF6 (Homo sapiens (Human)).